The sequence spans 121 residues: UPF0102 protein BVU_1879 (121 aa).

It belongs to the UPF0102 family.

This chain is UPF0102 protein BVU_1879, found in Phocaeicola vulgatus (strain ATCC 8482 / DSM 1447 / JCM 5826 / CCUG 4940 / NBRC 14291 / NCTC 11154) (Bacteroides vulgatus).